We begin with the raw amino-acid sequence, 213 residues long: Uridine kinase (213 aa).

Residue 15–22 (GASASGKS) participates in ATP binding.

The protein belongs to the uridine kinase family.

It localises to the cytoplasm. It catalyses the reaction uridine + ATP = UMP + ADP + H(+). The catalysed reaction is cytidine + ATP = CMP + ADP + H(+). Its pathway is pyrimidine metabolism; CTP biosynthesis via salvage pathway; CTP from cytidine: step 1/3. It participates in pyrimidine metabolism; UMP biosynthesis via salvage pathway; UMP from uridine: step 1/1. The protein is Uridine kinase of Serratia proteamaculans (strain 568).